The primary structure comprises 436 residues: Histidinol dehydrogenase (436 aa).

Residues S242, Q264, and H267 each contribute to the substrate site. 2 residues coordinate Zn(2+): Q264 and H267. Active-site proton acceptor residues include E332 and H333. Residues H333, D366, E420, and H425 each contribute to the substrate site. A Zn(2+)-binding site is contributed by D366. H425 provides a ligand contact to Zn(2+).

The protein belongs to the histidinol dehydrogenase family. Requires Zn(2+) as cofactor.

The catalysed reaction is L-histidinol + 2 NAD(+) + H2O = L-histidine + 2 NADH + 3 H(+). It participates in amino-acid biosynthesis; L-histidine biosynthesis; L-histidine from 5-phospho-alpha-D-ribose 1-diphosphate: step 9/9. Functionally, catalyzes the sequential NAD-dependent oxidations of L-histidinol to L-histidinaldehyde and then to L-histidine. The chain is Histidinol dehydrogenase from Nitratidesulfovibrio vulgaris (strain ATCC 29579 / DSM 644 / CCUG 34227 / NCIMB 8303 / VKM B-1760 / Hildenborough) (Desulfovibrio vulgaris).